The primary structure comprises 97 residues: Large ribosomal subunit protein uL23 (97 aa).

The protein belongs to the universal ribosomal protein uL23 family. In terms of assembly, part of the 50S ribosomal subunit. Contacts protein L29, and trigger factor when it is bound to the ribosome.

One of the early assembly proteins it binds 23S rRNA. One of the proteins that surrounds the polypeptide exit tunnel on the outside of the ribosome. Forms the main docking site for trigger factor binding to the ribosome. This is Large ribosomal subunit protein uL23 from Acidithiobacillus ferrooxidans (strain ATCC 23270 / DSM 14882 / CIP 104768 / NCIMB 8455) (Ferrobacillus ferrooxidans (strain ATCC 23270)).